The following is a 77-amino-acid chain: Small ribosomal subunit protein bS16 (77 aa).

It belongs to the bacterial ribosomal protein bS16 family.

This is Small ribosomal subunit protein bS16 from Wolinella succinogenes (strain ATCC 29543 / DSM 1740 / CCUG 13145 / JCM 31913 / LMG 7466 / NCTC 11488 / FDC 602W) (Vibrio succinogenes).